The primary structure comprises 100 residues: Large ribosomal subunit protein eL21 (100 aa).

It belongs to the eukaryotic ribosomal protein eL21 family.

The chain is Large ribosomal subunit protein eL21 from Pyrobaculum arsenaticum (strain DSM 13514 / JCM 11321 / PZ6).